The primary structure comprises 66 residues: Xenoxin-3 (66 aa).

4 disulfides stabilise this stretch: C3–C24, C17–C37, C43–C58, and C59–C64.

Expressed by the skin dorsal glands.

It localises to the secreted. Functionally, lacks alpha-neurotoxic activity, has apparently no antibacterial activity, nor anti-coagulant potency. The protein is Xenoxin-3 of Xenopus laevis (African clawed frog).